A 520-amino-acid chain; its full sequence is Peptide chain release factor 3 (520 aa).

Residues 8–273 (ESRKTFAIIS…AYVDHAPMPN (266 aa)) form the tr-type G domain. GTP is bound by residues 17 to 24 (SHPDAGKT), 85 to 89 (DTPGH), and 139 to 142 (NKLD).

It belongs to the TRAFAC class translation factor GTPase superfamily. Classic translation factor GTPase family. PrfC subfamily.

It is found in the cytoplasm. In terms of biological role, increases the formation of ribosomal termination complexes and stimulates activities of RF-1 and RF-2. It binds guanine nucleotides and has strong preference for UGA stop codons. It may interact directly with the ribosome. The stimulation of RF-1 and RF-2 is significantly reduced by GTP and GDP, but not by GMP. The sequence is that of Peptide chain release factor 3 from Staphylococcus carnosus (strain TM300).